The following is a 198-amino-acid chain: Pyridoxal 5'-phosphate synthase subunit PdxT (198 aa).

49-51 (GES) contacts L-glutamine. Cysteine 81 functions as the Nucleophile in the catalytic mechanism. Residues arginine 113 and 141–142 (IR) each bind L-glutamine. Residues histidine 177 and glutamate 179 each act as charge relay system in the active site.

This sequence belongs to the glutaminase PdxT/SNO family. In the presence of PdxS, forms a dodecamer of heterodimers. Only shows activity in the heterodimer.

It catalyses the reaction aldehydo-D-ribose 5-phosphate + D-glyceraldehyde 3-phosphate + L-glutamine = pyridoxal 5'-phosphate + L-glutamate + phosphate + 3 H2O + H(+). The enzyme catalyses L-glutamine + H2O = L-glutamate + NH4(+). It functions in the pathway cofactor biosynthesis; pyridoxal 5'-phosphate biosynthesis. Functionally, catalyzes the hydrolysis of glutamine to glutamate and ammonia as part of the biosynthesis of pyridoxal 5'-phosphate. The resulting ammonia molecule is channeled to the active site of PdxS. The protein is Pyridoxal 5'-phosphate synthase subunit PdxT of Mycobacterium tuberculosis (strain ATCC 25177 / H37Ra).